Reading from the N-terminus, the 372-residue chain is MPLPDFHVSEPFTLGIELEMQVVNPPGYDLSQDSSMLIDAVKNKITAGEVKHDITESMLELATDVCRDINQAAGQFSAMQKVVLQAAADHHLEICGGGTHPFQKWQRQEVCDNERYQRTLENFGYLIQQATVFGQHVHVGCASGDDAIYLLHGLSRFVPHFIALSAASPYMQGTDTRFASSRPNIFSAFPDNGPMPWVSNWQQFEALFRCLSYTTMIDSIKDLHWDIRPSPHFGTVEVRVMDTPLTLSHAVNMAGLIQATAHWLLTERPFKHQEKDYLLYKFNRFQACRYGLEGVITDPHTGDRRSLTEDTLRLLEKIAPSAHKIGASSAIEALHRQVVSGLNEAQLMRDFVADGGSLIGLVKKHCEIWTGE.

This sequence belongs to the glutamate--cysteine ligase type 2 family. YbdK subfamily. As to quaternary structure, homodimer.

It catalyses the reaction L-cysteine + L-glutamate + ATP = gamma-L-glutamyl-L-cysteine + ADP + phosphate + H(+). Functionally, ATP-dependent carboxylate-amine ligase which exhibits weak glutamate--cysteine ligase activity. This is Putative glutamate--cysteine ligase 2 (ybdK) from Escherichia coli O17:K52:H18 (strain UMN026 / ExPEC).